Consider the following 141-residue polypeptide: Drosulfakinins (141 aa).

The first 31 residues, 1-31 (MGLRSCTHLATLFMTLWAVAFCFLVVVPIPA), serve as a signal peptide directing secretion. The propeptide occupies 32 to 73 (QTTSLQNAKDDRRLQELESKIGAESDQTNANLVGPSFSRFGD). Phe82 is modified (phenylalanine amide). Residues 86 to 111 (VPLISRPMIPIELDLLMDNDDERTKA) constitute a propeptide that is removed on maturation. Residue Tyr117 is modified to Sulfotyrosine. Phe122 is subject to Phenylalanine amide. The residue at position 134 (Tyr134) is a Sulfotyrosine. Phe139 is modified (phenylalanine amide).

Belongs to the gastrin/cholecystokinin family.

It is found in the secreted. In terms of biological role, drosulfakinin-0 (DSK 0) plays diverse biological roles including regulating gut muscle contraction in adults but not in larvae. This chain is Drosulfakinins, found in Drosophila simulans (Fruit fly).